Reading from the N-terminus, the 1382-residue chain is DNA-directed RNA polymerase subunit beta (1382 aa).

This sequence belongs to the RNA polymerase beta chain family. The RNAP catalytic core consists of 2 alpha, 1 beta, 1 beta' and 1 omega subunit. When a sigma factor is associated with the core the holoenzyme is formed, which can initiate transcription.

The enzyme catalyses RNA(n) + a ribonucleoside 5'-triphosphate = RNA(n+1) + diphosphate. Its function is as follows. DNA-dependent RNA polymerase catalyzes the transcription of DNA into RNA using the four ribonucleoside triphosphates as substrates. This chain is DNA-directed RNA polymerase subunit beta, found in Paracoccus denitrificans (strain Pd 1222).